A 227-amino-acid polypeptide reads, in one-letter code: Translation initiation factor 6 (227 aa).

This sequence belongs to the eIF-6 family.

Its function is as follows. Binds to the 50S ribosomal subunit and prevents its association with the 30S ribosomal subunit to form the 70S initiation complex. In Methanococcus aeolicus (strain ATCC BAA-1280 / DSM 17508 / OCM 812 / Nankai-3), this protein is Translation initiation factor 6.